Consider the following 143-residue polypeptide: Actinoxanthin (143 aa).

The signal sequence occupies residues 1 to 33 (MSLRHMSRRASRFGVVAVASIGLAAAAQSVAFA). Intrachain disulfides connect cysteine 69-cysteine 78 and cysteine 119-cysteine 124.

The protein belongs to the neocarzinostatin family.

In terms of biological role, binds non-covalently to a chromophore which is the cytotoxic and mutagenic component of the antibiotic. The chromophore binds to DNA as a weak intercalator and causes single- and double-strand breaks. In Streptomyces globisporus, this protein is Actinoxanthin (axnA).